We begin with the raw amino-acid sequence, 561 residues long: Urocanate hydratase (561 aa).

Residues 52–53 (GG), glutamine 130, 176–178 (GMG), glutamate 196, arginine 201, 242–243 (NA), 267–271 (QTSAH), 277–278 (YL), and tyrosine 326 each bind NAD(+). The active site involves cysteine 414. Glycine 496 contributes to the NAD(+) binding site.

The protein belongs to the urocanase family. Requires NAD(+) as cofactor.

The protein resides in the cytoplasm. It catalyses the reaction 4-imidazolone-5-propanoate = trans-urocanate + H2O. Its pathway is amino-acid degradation; L-histidine degradation into L-glutamate; N-formimidoyl-L-glutamate from L-histidine: step 2/3. Its function is as follows. Catalyzes the conversion of urocanate to 4-imidazolone-5-propionate. This chain is Urocanate hydratase, found in Rhizobium rhizogenes (strain K84 / ATCC BAA-868) (Agrobacterium radiobacter).